A 395-amino-acid polypeptide reads, in one-letter code: WW domain-containing transcription regulator protein 1 (395 aa).

A Glycyl lysine isopeptide (Lys-Gly) (interchain with G-Cter in ubiquitin) cross-link involves residue K46. The interval 52-116 (FFKEPDSGSH…AQQHAHLRQQ (65 aa)) is disordered. A compositionally biased stretch (polar residues) spans 61-70 (HSRQSSTDSS). S62 bears the Phosphoserine mark. S89 carries the phosphoserine; by LATS2 modification. The region spanning 124 to 157 (LPLPPGWEMTFTATGQRYFLNHIEKITTWQDPRK) is the WW domain. The segment at 221–395 (PNALTTQQQQ…NKSEPFLTWL (175 aa)) is required for interaction with PALS1. The stretch at 224–258 (LTTQQQQQQKLRLQRIQMERERIRMRQEELMRQEA) forms a coiled coil. Over residues 277-293 (PAMSTDMRSVTNSSSDP) the composition is skewed to polar residues. Positions 277-308 (PAMSTDMRSVTNSSSDPFLNGGPYHSREQSTD) are disordered. A Phosphoserine modification is found at S290. At S306 the chain carries Phosphoserine; by LATS2. The short motif at 389 to 395 (EPFLTWL) is the PDZ-binding element.

In terms of assembly, binds to SLC9A3R2 via the PDZ motif at the plasma membrane. Binds to YWHAZ in vivo and in vitro through the phosphoserine-binding motif RSHSSP. Interacts (via coiled-coil domain) with SMAD2 (via MH1 domain), SMAD3 and SMAD4. Interacts with MED15. Interacts with PAX8 and NKX2-1. Interacts with TEAD1, TEAD2, TEAD3 and TEAD4. Interacts (via WW domain) with PALS1. Interacts with LATS1. Interacts with YAP1 (when phosphorylated at 'Ser-112'). Interacts (via WW domain) with PRRG4 (via cytoplasmic domain). Interacts (via WW domain) with AMOTL2 (via PPXY motif); the interaction promotes WWTR1/TAZ localization to the cytoplasm and tight junctions, thereby inhibiting its transcriptional coactivator properties. Interacts (via WW domain) with AMOT; the interaction facilitates translocation of WWTR1/TAZ to the cytoplasm. Post-translationally, phosphorylated by LATS2 and STK3/MST2. Phosphorylation by LATS2 results in creation of 14-3-3 binding sites, retention in the cytoplasm, and functional inactivation. Phosphorylation results in the inhibition of transcriptional coactivation through YWHAZ-mediated nuclear export. In terms of processing, ubiquitinated at Lys-46; leading to proteasomal degradation. Deubiquitinated and stabilized by UCHL1 at Lys-46; leading to inhibition of osteoclastogenesis. In terms of tissue distribution, highly expressed in kidney, heart, placenta and lung.

It is found in the nucleus. The protein localises to the cytoplasm. It localises to the cell membrane. The protein resides in the cell junction. Its subcellular location is the tight junction. In terms of biological role, transcriptional coactivator which acts as a downstream regulatory target in the Hippo signaling pathway that plays a pivotal role in organ size control and tumor suppression by restricting proliferation and promoting apoptosis. The core of this pathway is composed of a kinase cascade wherein STK3/MST2 and STK4/MST1, in complex with its regulatory protein SAV1, phosphorylates and activates LATS1/2 in complex with its regulatory protein MOB1, which in turn phosphorylates and inactivates YAP1 oncoprotein and WWTR1/TAZ. WWTR1 enhances PAX8 and NKX2-1/TTF1-dependent gene activation. In conjunction with YAP1, involved in the regulation of TGFB1-dependent SMAD2 and SMAD3 nuclear accumulation. Plays a key role in coupling SMADs to the transcriptional machinery such as the mediator complex. Regulates embryonic stem-cell self-renewal, promotes cell proliferation and epithelial-mesenchymal transition. This chain is WW domain-containing transcription regulator protein 1, found in Mus musculus (Mouse).